Here is a 415-residue protein sequence, read N- to C-terminus: Phosphoglycerate kinase (415 aa).

(2R)-3-phosphoglycerate is bound by residues V22, D23, F24, N25, Q37, R38, S61, H62, G64, R65, R121, H168, and R169. An ADP-binding site is contributed by G212. G212 lines the CDP pocket. AMP is bound by residues A213 and K214. A213 provides a ligand contact to ATP. A213 serves as a coordination point for Mg(2+). Residues A216 and D217 each contribute to the Mg(2+) site. D217 serves as a coordination point for CDP. An AMP-binding site is contributed by K218. K218 is an ATP binding site. ADP is bound at residue G236. G236 provides a ligand contact to CDP. 2 residues coordinate AMP: G237 and G311. G237 and G311 together coordinate ATP. Residues G336 and F341 each coordinate CDP. ADP is bound at residue F341. E342 contacts AMP. ATP contacts are provided by E342, D373, and T374. D373 contributes to the Mg(2+) binding site.

This sequence belongs to the phosphoglycerate kinase family. Monomer. Requires Mg(2+) as cofactor.

The protein localises to the cytoplasm. It carries out the reaction (2R)-3-phosphoglycerate + ATP = (2R)-3-phospho-glyceroyl phosphate + ADP. Its pathway is carbohydrate degradation; glycolysis; pyruvate from D-glyceraldehyde 3-phosphate: step 2/5. Functionally, enzyme of the glycolytic pathway. Glycolysis is essential in glial cells but not in neurons; neurons rely on the citric acid cycle for their energy needs, and on lactate and alanine secreted into the hemolymph by glial cells to fuel it. The chain is Phosphoglycerate kinase from Drosophila melanogaster (Fruit fly).